The chain runs to 391 residues: CBS domain-containing protein CBSX5 (391 aa).

CBS domains are found at residues 16–81 (GKPP…DHDH) and 331–391 (MARK…ENDM).

This is CBS domain-containing protein CBSX5 (CBSX5) from Arabidopsis thaliana (Mouse-ear cress).